A 154-amino-acid polypeptide reads, in one-letter code: Ribosome maturation factor RimP (154 aa).

The protein belongs to the RimP family.

It localises to the cytoplasm. Required for maturation of 30S ribosomal subunits. In Salmonella agona (strain SL483), this protein is Ribosome maturation factor RimP.